The primary structure comprises 870 residues: MDIIFCTPTYCKIMLMIIMLISLRTRCDTNNFLNCSVEKEEGEEEIISTNLKRINDDMNILGRILNDERNIKITDIVEMLQNEYDDKKKKKKKKKYIYRKKKSNNKINEINSVQHFNVKENILNEKKKNPLNDNFKNPKLRKHSPNNKKNKNKIGQIKFHIVGYDKKKITKYLTPSMISSIQKRLMNKNKKTNVNVNMSNGRVLPFFPKEYFLHSSTHEKKDKMATKKNNKEESIINERLLENLENISLSRTIKDIRGEEGNERKVKEEDNNIKEEGNSFKKYFKGVVKLYVDITEPNLEMIWQNYPPKSITGSGFIIEGHLIITNAHNISYSTRILIRKHGNSGKYEAKILYVAHDVDIAILTTDDKTFFDDVYALHFGALPSLKDEIITIGYPAGGDKLSVTEGIVSRIDVQYYKHSNYKFLLTQIDAPLNPGNSGGPALVRGKVVGICFQSYKVSNNISYIIPSTIISHFLLDIHKNKDYTGYAFLGVKYEPLENPSLREALGLEEMERKKIIKKNVGILITEVFEGHMSKQDDKYHDMDNKHHNVGDTHHNVGDTHHNVGDDHTDNLQGDTDYCTYILNSNIITSDKKNIYSDKKKKKIYSDNNNNNNNFNYYYNMHGEDEQSCYGLKKNDIILRVDGKDINNDGSVILRDNETVGFQHLFNEKFINDLCIIKIVRNKKIKSVMVKLYKVKYLLNQHNWDKRNKYFIYGGIVFSILTRSLYVYTQNPEINKLMLYNNFKKKSKDEIVVLKNILPTKITTGYYYTDSIVLRVNNIKVKNLKHLIELIEMTKYTNRLMYLKNNKHTLQSYINYYNTKITSLNINTIIHILILTTSGQKVPIVLNKRDVEKYNEEIKKIYSITRDRYVY.

The first 29 residues, 1-29 (MDIIFCTPTYCKIMLMIIMLISLRTRCDT), serve as a signal peptide directing secretion. The disordered stretch occupies residues 128 to 151 (KNPLNDNFKNPKLRKHSPNNKKNK). Over residues 138–151 (PKLRKHSPNNKKNK) the composition is skewed to basic residues. Active-site charge relay system residues include H328, D359, and S437.

This sequence belongs to the peptidase S1C family. As to quaternary structure, oligomer; may form trimers or hexamers. Forms a complex at least composed of DegP, ENO and HSP70.

The protein localises to the cytoplasm. It is found in the parasitophorous vacuole. The protein resides in the host cell membrane. Its subcellular location is the host cytoplasm. In terms of biological role, serine protease which also acts as a protein chaperone. Plays a role in the parasite development in host erythrocytes possibly by protecting it against thermal and oxidative stresses. The polypeptide is Serine protease DegP homolog (Plasmodium falciparum (isolate 3D7)).